A 271-amino-acid polypeptide reads, in one-letter code: Shikimate dehydrogenase (NADP(+)) (271 aa).

Shikimate-binding positions include 14–16 and T61; that span reads SQS. The Proton acceptor role is filled by K65. N86 and D101 together coordinate shikimate. NADP(+)-binding positions include 125–129, 148–153, and M212; these read GAGGA and NRTHAR. Y214 contributes to the shikimate binding site. Position 236 (G236) interacts with NADP(+).

This sequence belongs to the shikimate dehydrogenase family. As to quaternary structure, homodimer.

It carries out the reaction shikimate + NADP(+) = 3-dehydroshikimate + NADPH + H(+). It participates in metabolic intermediate biosynthesis; chorismate biosynthesis; chorismate from D-erythrose 4-phosphate and phosphoenolpyruvate: step 4/7. Involved in the biosynthesis of the chorismate, which leads to the biosynthesis of aromatic amino acids. Catalyzes the reversible NADPH linked reduction of 3-dehydroshikimate (DHSA) to yield shikimate (SA). This Edwardsiella ictaluri (strain 93-146) protein is Shikimate dehydrogenase (NADP(+)).